A 139-amino-acid chain; its full sequence is Acidic phospholipase A2 4 (139 aa).

Residues 1–16 form the signal peptide; sequence MRTLWIVAVWLVGVEG. 7 disulfides stabilise this stretch: Cys42/Cys131, Cys44/Cys60, Cys59/Cys111, Cys65/Cys139, Cys66/Cys104, Cys73/Cys97, and Cys91/Cys102. Ca(2+) is bound by residues Tyr43, Gly45, and Gly47. Residue His63 is part of the active site. Asp64 provides a ligand contact to Ca(2+). Asp105 is a catalytic residue.

The protein belongs to the phospholipase A2 family. Group II subfamily. D49 sub-subfamily. Ca(2+) is required as a cofactor. As to expression, expressed by the venom gland.

It is found in the secreted. The enzyme catalyses a 1,2-diacyl-sn-glycero-3-phosphocholine + H2O = a 1-acyl-sn-glycero-3-phosphocholine + a fatty acid + H(+). Functionally, PLA2 catalyzes the calcium-dependent hydrolysis of the 2-acyl groups in 3-sn-phosphoglycerides. The sequence is that of Acidic phospholipase A2 4 from Echis carinatus sochureki (Saw-scaled viper).